The sequence spans 220 residues: Putative NAD(P)H nitroreductase (220 aa).

Position 155 to 160 (155 to 160 (GASALG)) interacts with NAD(+).

Belongs to the nitroreductase family. FMN serves as cofactor.

This chain is Putative NAD(P)H nitroreductase, found in Haemophilus influenzae (strain ATCC 51907 / DSM 11121 / KW20 / Rd).